The following is a 342-amino-acid chain: 6-hydroxytryprostatin B O-methyltransferase (342 aa).

S-adenosyl-L-methionine is bound at residue D201. The Proton acceptor role is filled by H244.

Belongs to the class I-like SAM-binding methyltransferase superfamily. Cation-independent O-methyltransferase family. Homodimer.

It catalyses the reaction 6-hydroxytryprostatin B + S-adenosyl-L-methionine = tryprostatin A + S-adenosyl-L-homocysteine + H(+). It functions in the pathway alkaloid biosynthesis. Its function is as follows. 6-hydroxytryprostatin B O-methyltransferase; part of the gene cluster that mediates the biosynthesis of fumitremorgins, indole alkaloids that carry not only intriguing chemical structures, but also interesting biological and pharmacological activities. The biosynthesis of fumitremorgin-type alkaloids begins by condensation of the two amino acids L-tryptophan and L-proline to brevianamide F, catalyzed by the non-ribosomal peptide synthetase ftmA. Brevianamide F is then prenylated by the prenyltransferase ftmPT1/ftmB in the presence of dimethylallyl diphosphate, resulting in the formation of tryprostatin B. The three cytochrome P450 monooxygenases, ftmP450-1/ftmC, ftmP450-2/ftmE and ftmP450-3/FtmG, are responsible for the conversion of tryprostatin B to 6-hydroxytryprostatin B, tryprostatin A to fumitremorgin C and fumitremorgin C to 12,13-dihydroxyfumitremorgin C, respectively. The putative methyltransferase ftmMT/ftmD is expected for the conversion of 6-hydroxytryprostatin B to tryprostatin A. FtmPT2/FtmH catalyzes the prenylation of 12,13-dihydroxyfumitre-morgin C in the presence of dimethylallyl diphosphate, resulting in the formation of fumitremorgin B. Fumitremorgin B is further converted to verruculogen by ftmOx1/ftmF via the insertion of an endoperoxide bond between the two prenyl moieties. In some fungal species, verruculogen is further converted to fumitremorgin A, but the enzymes involved in this step have not been identified yet. The sequence is that of 6-hydroxytryprostatin B O-methyltransferase from Aspergillus fumigatus (Neosartorya fumigata).